The primary structure comprises 341 residues: tRNA N6-adenosine threonylcarbamoyltransferase (341 aa).

Residues histidine 115 and histidine 119 each contribute to the Fe cation site. Residues 138–142, aspartate 171, glycine 184, aspartate 188, and asparagine 279 contribute to the substrate site; that span reads VVSGG. Aspartate 307 is a binding site for Fe cation.

Belongs to the KAE1 / TsaD family. It depends on Fe(2+) as a cofactor.

It localises to the cytoplasm. The catalysed reaction is L-threonylcarbamoyladenylate + adenosine(37) in tRNA = N(6)-L-threonylcarbamoyladenosine(37) in tRNA + AMP + H(+). Required for the formation of a threonylcarbamoyl group on adenosine at position 37 (t(6)A37) in tRNAs that read codons beginning with adenine. Is involved in the transfer of the threonylcarbamoyl moiety of threonylcarbamoyl-AMP (TC-AMP) to the N6 group of A37, together with TsaE and TsaB. TsaD likely plays a direct catalytic role in this reaction. In Clostridium novyi (strain NT), this protein is tRNA N6-adenosine threonylcarbamoyltransferase.